A 188-amino-acid polypeptide reads, in one-letter code: Ribosomal RNA small subunit methyltransferase G (188 aa).

S-adenosyl-L-methionine contacts are provided by residues Gly-69, Phe-74, 119 to 120, and Arg-134; that span reads VQ.

This sequence belongs to the methyltransferase superfamily. RNA methyltransferase RsmG family.

The protein localises to the cytoplasm. The enzyme catalyses guanosine(527) in 16S rRNA + S-adenosyl-L-methionine = N(7)-methylguanosine(527) in 16S rRNA + S-adenosyl-L-homocysteine. Functionally, specifically methylates the N7 position of guanine in position 527 of 16S rRNA. The sequence is that of Ribosomal RNA small subunit methyltransferase G from Campylobacter jejuni subsp. doylei (strain ATCC BAA-1458 / RM4099 / 269.97).